We begin with the raw amino-acid sequence, 333 residues long: MDERLLSQSHQQYEDSEEWSLRPQRFEQYIGQEKAKGNLSVFIQAAKLRSETLDHVLLYGPPGLGKTTLAQIIANEMGVGIKTTAGPAIERPGDLAAILSTLEPGDVLFIDEIHRLSRTIEEILYPAMEDYCLDIVYGQGEMARSVRIDLPPFTLVGATTRAGMLSAPLRDRFGVTLKLEYYETHELAAIVSRTAQLFRLSISPEASGAIAKRSRGTPRIANRLLRRVRDFAQVAGTKEIDPVLASDALDRLHVDALGLDEVDHRLLRAMVERFGGGPVGLETLAATIGEDAQTIEDVYEPYLLQQGFLQRTPRGRMITQFAKSHFGYEEEEE.

The interval 1 to 182 is large ATPase domain (RuvB-L); the sequence is MDERLLSQSH…FGVTLKLEYY (182 aa). ATP-binding positions include leucine 21, arginine 22, glycine 63, lysine 66, threonine 67, threonine 68, 129–131, arginine 172, tyrosine 182, and arginine 219; that span reads EDY. Threonine 67 contributes to the Mg(2+) binding site. Positions 183–253 are small ATPAse domain (RuvB-S); it reads ETHELAAIVS…LASDALDRLH (71 aa). The interval 256–333 is head domain (RuvB-H); sequence ALGLDEVDHR…SHFGYEEEEE (78 aa). 2 residues coordinate DNA: arginine 311 and arginine 316.

This sequence belongs to the RuvB family. Homohexamer. Forms an RuvA(8)-RuvB(12)-Holliday junction (HJ) complex. HJ DNA is sandwiched between 2 RuvA tetramers; dsDNA enters through RuvA and exits via RuvB. An RuvB hexamer assembles on each DNA strand where it exits the tetramer. Each RuvB hexamer is contacted by two RuvA subunits (via domain III) on 2 adjacent RuvB subunits; this complex drives branch migration. In the full resolvosome a probable DNA-RuvA(4)-RuvB(12)-RuvC(2) complex forms which resolves the HJ.

The protein localises to the cytoplasm. The enzyme catalyses ATP + H2O = ADP + phosphate + H(+). The RuvA-RuvB-RuvC complex processes Holliday junction (HJ) DNA during genetic recombination and DNA repair, while the RuvA-RuvB complex plays an important role in the rescue of blocked DNA replication forks via replication fork reversal (RFR). RuvA specifically binds to HJ cruciform DNA, conferring on it an open structure. The RuvB hexamer acts as an ATP-dependent pump, pulling dsDNA into and through the RuvAB complex. RuvB forms 2 homohexamers on either side of HJ DNA bound by 1 or 2 RuvA tetramers; 4 subunits per hexamer contact DNA at a time. Coordinated motions by a converter formed by DNA-disengaged RuvB subunits stimulates ATP hydrolysis and nucleotide exchange. Immobilization of the converter enables RuvB to convert the ATP-contained energy into a lever motion, pulling 2 nucleotides of DNA out of the RuvA tetramer per ATP hydrolyzed, thus driving DNA branch migration. The RuvB motors rotate together with the DNA substrate, which together with the progressing nucleotide cycle form the mechanistic basis for DNA recombination by continuous HJ branch migration. Branch migration allows RuvC to scan DNA until it finds its consensus sequence, where it cleaves and resolves cruciform DNA. This chain is Holliday junction branch migration complex subunit RuvB, found in Exiguobacterium sp. (strain ATCC BAA-1283 / AT1b).